The following is a 398-amino-acid chain: uncharacterized protein (398 aa).

The disordered stretch occupies residues 313–398 (KTIKSSGSKT…TSKSIKYYEV (86 aa)). 2 stretches are compositionally biased toward low complexity: residues 314–333 (TIKS…TNKS) and 343–398 (GSKT…YYEV).

This is an uncharacterized protein from Acanthamoeba polyphaga mimivirus (APMV).